A 331-amino-acid polypeptide reads, in one-letter code: MALDETLFGYPIYPKFKLGEPRFPQDTFLGRYLHCLDVIDPRTLFASNKKLEESLELLNSFKAGTATNVPDKSLWEAQKLKSAILHPDTGEKVLPPFRMSGFVPFGWITVTGMLLPNPSWPTLLFWQWMNQSHNACVNYANRNATQPQPLSKYIGAYGAAVTAACSISGGLTYFIKKASSLPPTTRIIIQRFVPLPATSLASSLNVICMRWNELETGIQVYEKDTGKVVGVSKVAAKQAVTDTTMVRAFLPVPLLLMPPCIMPYLERFKWVTKTQVRHIFVNAIVCTLSFAVSLPVALALFPQESAISREQLEPELQQKTKNSLLYYNKGL.

Helical transmembrane passes span 104–126 (PFGW…LLFW), 153–175 (YIGA…TYFI), 243–265 (TTMV…MPYL), and 278–300 (HIFV…ALAL).

It belongs to the sideroflexin family.

It localises to the mitochondrion inner membrane. The enzyme catalyses citrate(in) = citrate(out). Mitochondrial amino-acid transporter. The chain is Sideroflexin-5 from Caenorhabditis elegans.